Consider the following 50-residue polypeptide: Large ribosomal subunit protein eL39 (50 aa).

It belongs to the eukaryotic ribosomal protein eL39 family. As to quaternary structure, part of the 50S ribosomal subunit. Interacts weakly with protein L23.

In terms of biological role, binds to the 23S rRNA. Forms part of the polypeptide exit tunnel. The protein is Large ribosomal subunit protein eL39 (rpl39e) of Haloarcula marismortui (strain ATCC 43049 / DSM 3752 / JCM 8966 / VKM B-1809) (Halobacterium marismortui).